The chain runs to 336 residues: Cell division protein ZipA (336 aa).

Over 1–6 (MEDLQL) the chain is Periplasmic. The helical transmembrane segment at 7 to 27 (VLFVLGAIAIIAVLVHGFWSI) threads the bilayer. The Cytoplasmic portion of the chain corresponds to 28 to 336 (RKQQPKPIKE…DYLRRIKAIV (309 aa)). Disordered regions lie at residues 31–118 (QPKP…PVRA) and 174–200 (YGAT…EPLG). Residues 73–91 (LPSSRNHTSVPVMTLQKAS) are compositionally biased toward polar residues. Residues 108-118 (TTAERAEPVRA) are compositionally biased toward basic and acidic residues. The segment covering 179–193 (QASPQPASPVQSQAP) has biased composition (low complexity).

The protein belongs to the ZipA family. In terms of assembly, interacts with FtsZ via their C-terminal domains.

It localises to the cell inner membrane. In terms of biological role, essential cell division protein that stabilizes the FtsZ protofilaments by cross-linking them and that serves as a cytoplasmic membrane anchor for the Z ring. Also required for the recruitment to the septal ring of downstream cell division proteins. This chain is Cell division protein ZipA, found in Shewanella denitrificans (strain OS217 / ATCC BAA-1090 / DSM 15013).